Here is a 241-residue protein sequence, read N- to C-terminus: Geranylgeranylglyceryl phosphate synthase (241 aa).

Positions 26 and 52 each coordinate Mg(2+). Sn-glycerol 1-phosphate contacts are provided by residues 172-178, 204-205, and 226-227; these read YFEAGSG, GG, and GT.

It belongs to the GGGP/HepGP synthase family. Group II subfamily. The cofactor is Mg(2+).

It localises to the cytoplasm. The catalysed reaction is sn-glycerol 1-phosphate + (2E,6E,10E)-geranylgeranyl diphosphate = sn-3-O-(geranylgeranyl)glycerol 1-phosphate + diphosphate. It participates in membrane lipid metabolism; glycerophospholipid metabolism. In terms of biological role, prenyltransferase that catalyzes the transfer of the geranylgeranyl moiety of geranylgeranyl diphosphate (GGPP) to the C3 hydroxyl of sn-glycerol-1-phosphate (G1P). This reaction is the first ether-bond-formation step in the biosynthesis of archaeal membrane lipids. In Hyperthermus butylicus (strain DSM 5456 / JCM 9403 / PLM1-5), this protein is Geranylgeranylglyceryl phosphate synthase.